Consider the following 151-residue polypeptide: Small ribosomal subunit protein uS15 (151 aa).

A disordered region spans residues 1-20 (MARLHSGKRGSSGSTRPLRT).

This sequence belongs to the universal ribosomal protein uS15 family. Part of the 30S ribosomal subunit.

In Methanococcus maripaludis (strain DSM 14266 / JCM 13030 / NBRC 101832 / S2 / LL), this protein is Small ribosomal subunit protein uS15.